The chain runs to 98 residues: Sarcosine oxidase subunit delta (98 aa).

Zn(2+) contacts are provided by C6, C9, H59, and C63.

This sequence belongs to the SoxD family. As to quaternary structure, heterotetramer composed of subunits alpha (SoxA), beta (SoxB), gamma (SoxG) and delta (SoxD).

Its subcellular location is the cytoplasm. The catalysed reaction is sarcosine + (6S)-5,6,7,8-tetrahydrofolate + O2 = (6R)-5,10-methylene-5,6,7,8-tetrahydrofolate + glycine + H2O2. It carries out the reaction sarcosine + O2 + H2O = formaldehyde + glycine + H2O2. In terms of biological role, in the presence of tetrahydrofolate, catalyzes the oxidative demethylation of sarcosine to yield glycine, 5,10-methylenetetrahydrofolate and hydrogen peroxide. In the absence of tetrahydrofolate, catalyzes the oxidative demethylation of sarcosine to yield glycine, formaldehyde and hydrogen peroxide. This Corynebacterium sp. (strain P-1) protein is Sarcosine oxidase subunit delta.